Reading from the N-terminus, the 103-residue chain is Co-chaperonin GroES (103 aa).

The protein belongs to the GroES chaperonin family. In terms of assembly, heptamer of 7 subunits arranged in a ring. Interacts with the chaperonin GroEL.

Its subcellular location is the cytoplasm. Together with the chaperonin GroEL, plays an essential role in assisting protein folding. The GroEL-GroES system forms a nano-cage that allows encapsulation of the non-native substrate proteins and provides a physical environment optimized to promote and accelerate protein folding. GroES binds to the apical surface of the GroEL ring, thereby capping the opening of the GroEL channel. The chain is Co-chaperonin GroES from Prochlorococcus marinus (strain MIT 9211).